The sequence spans 268 residues: Glucosamine-6-phosphate deaminase (268 aa).

D72 functions as the Proton acceptor; for enolization step in the catalytic mechanism. The For ring-opening step role is filled by D141. Catalysis depends on H143, which acts as the Proton acceptor; for ring-opening step. The active-site For ring-opening step is the E148.

The protein belongs to the glucosamine/galactosamine-6-phosphate isomerase family. NagB subfamily. In terms of assembly, homohexamer.

It catalyses the reaction alpha-D-glucosamine 6-phosphate + H2O = beta-D-fructose 6-phosphate + NH4(+). It functions in the pathway amino-sugar metabolism; N-acetylneuraminate degradation; D-fructose 6-phosphate from N-acetylneuraminate: step 5/5. Its activity is regulated as follows. Allosterically activated by N-acetylglucosamine 6-phosphate (GlcNAc6P). In terms of biological role, catalyzes the reversible isomerization-deamination of glucosamine 6-phosphate (GlcN6P) to form fructose 6-phosphate (Fru6P) and ammonium ion. This is Glucosamine-6-phosphate deaminase from Histophilus somni (strain 129Pt) (Haemophilus somnus).